A 202-amino-acid polypeptide reads, in one-letter code: Prostamide/prostaglandin F synthase (202 aa).

Y108 carries the phosphotyrosine modification.

Belongs to the peroxiredoxin-like PRXL2 family. Prostamide/prostaglandin F synthase subfamily.

Its subcellular location is the cytoplasm. The protein localises to the cytosol. It catalyses the reaction prostaglandin H2 + [thioredoxin]-dithiol = prostaglandin F2alpha + [thioredoxin]-disulfide. The enzyme catalyses prostamide F2alpha + [thioredoxin]-disulfide = prostamide H2 + [thioredoxin]-dithiol. Catalyzes the reduction of prostaglandin-ethanolamide H(2) (prostamide H(2)) to prostamide F(2alpha) with NADPH as proton donor. Also able to reduce prostaglandin H(2) to prostaglandin F(2alpha). The protein is Prostamide/prostaglandin F synthase (PRXL2B) of Sus scrofa (Pig).